The primary structure comprises 192 residues: uncharacterized protein (192 aa).

A Nudix hydrolase domain is found at 29 to 160 (HRQAAVLIPI…PLDIYRRGDS (132 aa)). The Nudix box signature appears at 67-89 (GAVDDTDASVIAAALREAEEEVA). Residues Glu-83 and Glu-87 each coordinate Mg(2+).

This sequence belongs to the Nudix hydrolase family. PCD1 subfamily. Mn(2+) serves as cofactor. Requires Mg(2+) as cofactor.

Probably mediates the hydrolysis of some nucleoside diphosphate derivatives. This is an uncharacterized protein from Shigella flexneri serotype 5b (strain 8401).